A 272-amino-acid chain; its full sequence is Putative esterase/lipase 3 (272 aa).

H34 is an active-site residue. Residue S100 is the Charge relay system of the active site.

This sequence belongs to the lipase/esterase LIP3/BchO family.

In Mycoplasma pneumoniae (strain ATCC 29342 / M129 / Subtype 1) (Mycoplasmoides pneumoniae), this protein is Putative esterase/lipase 3.